Reading from the N-terminus, the 587-residue chain is Glutathione hydrolase proenzyme (587 aa).

The signal sequence occupies residues Met-1–Ala-28. The propeptide occupies Lys-29–Tyr-35. An L-glutamate-binding site is contributed by Arg-113. Thr-403 (nucleophile) is an active-site residue. L-glutamate contacts are provided by residues Thr-421, Glu-423, Glu-442, Asp-445, Ser-464 to Ser-465, and Gly-485 to Gly-486.

The protein belongs to the gamma-glutamyltransferase family. As to quaternary structure, this enzyme consists of two polypeptide chains, which are synthesized in precursor form from a single polypeptide. In terms of processing, cleaved by autocatalysis into a large and a small subunit.

The protein resides in the secreted. The enzyme catalyses an N-terminal (5-L-glutamyl)-[peptide] + an alpha-amino acid = 5-L-glutamyl amino acid + an N-terminal L-alpha-aminoacyl-[peptide]. It carries out the reaction glutathione + H2O = L-cysteinylglycine + L-glutamate. The catalysed reaction is an S-substituted glutathione + H2O = an S-substituted L-cysteinylglycine + L-glutamate. The protein operates within sulfur metabolism; glutathione metabolism. In terms of biological role, cleaves the gamma-glutamyl bond of extracellular glutathione (gamma-Glu-Cys-Gly), glutathione conjugates, and other gamma-glutamyl compounds. The metabolism of glutathione releases free glutamate and the dipeptide cysteinyl-glycine, which is hydrolyzed to cysteine and glycine by dipeptidases. The chain is Glutathione hydrolase proenzyme (ggt) from Bacillus subtilis (strain 168).